The following is a 244-amino-acid chain: Small ribosomal subunit protein uS2 (244 aa).

This sequence belongs to the universal ribosomal protein uS2 family.

The protein is Small ribosomal subunit protein uS2 of Psychromonas ingrahamii (strain DSM 17664 / CCUG 51855 / 37).